A 222-amino-acid chain; its full sequence is Millepora cytotoxin-1 (222 aa).

A signal peptide spans 1–20 (MVTLYLHVPILLLVVITARA). A propeptide spanning residues 21–75 (APKPDTHNPFDELSSVAEKQDLHYGDRSRKDPFIAQNDVGNNFRDGTQENLTKVR) is cleaved from the precursor. Cystine bridges form between Cys-89–Cys-115, Cys-142–Cys-168, and Cys-179–Cys-222. Repeats lie at residues 100 to 109 (SIHDNHYEDR), 153 to 162 (SIHDNYYEDR), and 206 to 215 (SQHNNYYEDR).

It belongs to the dermatopontin family. Is not glycosylated.

The protein resides in the secreted. Its subcellular location is the nematocyst. Functionally, is potently cytotoxic (EC(50) value 79 ng/mL) towards L1210 mouse leukemia cells, has hemagglutination activity on sheep erythrocytes, and is lethal in crayfish. Has no phospholipase A2 activity. This chain is Millepora cytotoxin-1, found in Millepora dichotoma (Net fire coral).